A 266-amino-acid chain; its full sequence is 3-methyl-2-oxobutanoate hydroxymethyltransferase 2 (266 aa).

D45 and D84 together coordinate Mg(2+). Residues D45–S46, D84, and K112 contribute to the 3-methyl-2-oxobutanoate site. E114 is a binding site for Mg(2+). The Proton acceptor role is filled by E181.

It belongs to the PanB family. Homodecamer; pentamer of dimers. Mg(2+) is required as a cofactor.

It localises to the cytoplasm. It carries out the reaction 3-methyl-2-oxobutanoate + (6R)-5,10-methylene-5,6,7,8-tetrahydrofolate + H2O = 2-dehydropantoate + (6S)-5,6,7,8-tetrahydrofolate. It functions in the pathway cofactor biosynthesis; (R)-pantothenate biosynthesis; (R)-pantoate from 3-methyl-2-oxobutanoate: step 1/2. In terms of biological role, catalyzes the reversible reaction in which hydroxymethyl group from 5,10-methylenetetrahydrofolate is transferred onto alpha-ketoisovalerate to form ketopantoate. This is 3-methyl-2-oxobutanoate hydroxymethyltransferase 2 from Pseudomonas fluorescens (strain ATCC BAA-477 / NRRL B-23932 / Pf-5).